The chain runs to 420 residues: Protein STB1 (420 aa).

Ser-2 is subject to N-acetylserine. Positions 2–70 are interaction with SWI6; it reads SQPQMSPEKE…DEDHKTLLEA (69 aa). Ser-7 carries the phosphoserine modification. Disordered regions lie at residues 30 to 187 and 273 to 319; these read QLKL…SDNT and DSPS…ELNG. Over residues 43 to 55 the composition is skewed to basic and acidic residues; it reads RKQDSTTKKRSGE. At Ser-72 the chain carries Phosphoserine. The residue at position 99 (Thr-99) is a Phosphothreonine. The residue at position 102 (Ser-102) is a Phosphoserine. Over residues 106 to 122 the composition is skewed to basic and acidic residues; sequence RKAEDRSQQIKPRKEDT. Over residues 156-169 the composition is skewed to low complexity; it reads NNNNSSNHSNNNNN. The segment covering 277-319 has biased composition (polar residues); the sequence is LYLSNNNGSVQATLSPQQRRKPTTNTLHPPSNVPTTPSRELNG. Thr-419 is modified (phosphothreonine).

As to quaternary structure, interacts with the ANK repeats of SWI6. The interaction with SWI6 is required for function. Interacts with SIN3. Post-translationally, phosphorylated by CDC28 in a cell cycle-dependent manner, inhibiting the interaction with SWI6.

Its subcellular location is the cytoplasm. It is found in the nucleus. Functionally, involved in the regulation and timing of MBF-dependent transcription in late G1 of the cell cycle. This chain is Protein STB1 (STB1), found in Saccharomyces cerevisiae (strain ATCC 204508 / S288c) (Baker's yeast).